We begin with the raw amino-acid sequence, 367 residues long: MKMEDMSLSGLDNTKLEALAHDVYSDLVEDACLGLCFEVHRAVKQGYFFLDETDQESMKDFEIVDQPGVDIFGQVYNQWKNKECVCPNCSRSIAASRFAPHLEKCLGMGRNSSRIANRRIASSNNTSKSESDQEDNDDINDNDWSYGSEKKAKKRKSEKNPNSPRRSKSLKHKNGELSGSVNPDMYKYNYSSGISYETLGPEELRSILTTQCGVVSEHTKKMCTRSQRCPQHTDEQRRAVRVFLLGPSASTLPDADTMLENEAYEPPDGQLIMSRLHWDASSDISPSDSASSKASTNNSESKRPKKKKPSTLSLTPAGERDKAQERDRIAGSGSSGSSSQNALGLSSRKKRPKLAVPPAPSIYDDLN.

The segment at 84–105 (CVCPNCSRSIAASRFAPHLEKC) adopts an SGF11-type zinc-finger fold. A compositionally biased stretch (low complexity) spans 116 to 125 (ANRRIASSNN). The disordered stretch occupies residues 116–184 (ANRRIASSNN…GELSGSVNPD (69 aa)). Residues 132–141 (DQEDNDDIND) are compositionally biased toward acidic residues. The region spanning 199 to 266 (LGPEELRSIL…TMLENEAYEP (68 aa)) is the SCA7 domain. The span at 280 to 299 (ASSDISPSDSASSKASTNNS) shows a compositional bias: low complexity. The tract at residues 280-367 (ASSDISPSDS…PAPSIYDDLN (88 aa)) is disordered. Residues 318–329 (GERDKAQERDRI) show a composition bias toward basic and acidic residues. A compositionally biased stretch (low complexity) spans 330–346 (AGSGSSGSSSQNALGLS).

It belongs to the SGF11 family. Component of some SAGA transcription coactivator-HAT complexes. Within the SAGA complex, participates in a subcomplex of SAGA called the DUB module (deubiquitination module).

It localises to the nucleus. Its function is as follows. Component of the transcription regulatory histone acetylation (HAT) complex SAGA, a multiprotein complex that activates transcription by remodeling chromatin and mediating histone acetylation and deubiquitination. Within the SAGA complex, participates in a subcomplex that specifically deubiquitinates histone H2B. The SAGA complex is recruited to specific gene promoters by activators, where it is required for transcription. In Danio rerio (Zebrafish), this protein is Ataxin-7-like protein 3 (atxn7l3).